The sequence spans 370 residues: Cyclin-A3-4 (370 aa).

It belongs to the cyclin family. Cyclin AB subfamily. In terms of assembly, interacts with FZR2/CCS52A1, FZR1/CCS52A2 and FZR3/CCS52B.

The sequence is that of Cyclin-A3-4 (CYCA3-4) from Arabidopsis thaliana (Mouse-ear cress).